The primary structure comprises 1482 residues: Type VII secretion system protein EssC (1482 aa).

At 1–229 (MHKLIIKYNK…RPPQPIQKNN (229 aa)) the chain is on the cytoplasmic side. Residues 230 to 252 (TVIWRSIIPPLVMIALTVVIFLV) form a helical membrane-spanning segment. Topologically, residues 253 to 256 (RPIG) are extracellular. The helical transmembrane segment at 257–279 (IYILMMIGMSTVTIVFGITTYFS) threads the bilayer. The Cytoplasmic segment spans residues 280–1482 (EKKKYNKDVE…EYQKIKLMEG (1203 aa)). FtsK domains follow at residues 652 to 846 (DDIL…QDSN) and 997 to 1183 (QGPM…NELT). ATP-binding positions include 672-679 (GTTGSGKS) and 1014-1021 (GSPGYGRT).

This sequence belongs to the EssC family. Homooligomer. Interacts with EsaE.

The protein resides in the cell membrane. Functionally, component of the type VII secretion system (Ess). Required for the secretion of substrates including EsxA and EsxB. However, unable to support secretion of the substrate protein EsxC. The sequence is that of Type VII secretion system protein EssC from Staphylococcus aureus (strain MRSA252).